A 447-amino-acid chain; its full sequence is Tubulin beta-1 chain (447 aa).

Positions 11, 69, 138, 142, 143, 144, 204, and 226 each coordinate GTP. E69 is a Mg(2+) binding site. Residues 424–447 (QYQDATAEEEGEGDEEEAEGEAAA) are disordered. Acidic residues predominate over residues 429–447 (TAEEEGEGDEEEAEGEAAA).

It belongs to the tubulin family. Dimer of alpha and beta chains. A typical microtubule is a hollow water-filled tube with an outer diameter of 25 nm and an inner diameter of 15 nM. Alpha-beta heterodimers associate head-to-tail to form protofilaments running lengthwise along the microtubule wall with the beta-tubulin subunit facing the microtubule plus end conferring a structural polarity. Microtubules usually have 13 protofilaments but different protofilament numbers can be found in some organisms and specialized cells. Requires Mg(2+) as cofactor.

The protein localises to the cytoplasm. It localises to the cytoskeleton. Functionally, tubulin is the major constituent of microtubules, a cylinder consisting of laterally associated linear protofilaments composed of alpha- and beta-tubulin heterodimers. Microtubules grow by the addition of GTP-tubulin dimers to the microtubule end, where a stabilizing cap forms. Below the cap, tubulin dimers are in GDP-bound state, owing to GTPase activity of alpha-tubulin. This is Tubulin beta-1 chain (TUBB1) from Cyanophora paradoxa.